A 138-amino-acid polypeptide reads, in one-letter code: Cysteine desulfuration protein SufE (138 aa).

Residue cysteine 51 is the Cysteine persulfide intermediate of the active site.

Belongs to the SufE family. As to quaternary structure, homodimer. Interacts with SufS.

It localises to the cytoplasm. It participates in cofactor biosynthesis; iron-sulfur cluster biosynthesis. Participates in cysteine desulfuration mediated by SufS. Cysteine desulfuration mobilizes sulfur from L-cysteine to yield L-alanine and constitutes an essential step in sulfur metabolism for biosynthesis of a variety of sulfur-containing biomolecules. Functions as a sulfur acceptor for SufS, by mediating the direct transfer of the sulfur atom from the S-sulfanylcysteine of SufS, an intermediate product of cysteine desulfuration process. In Shigella boydii serotype 18 (strain CDC 3083-94 / BS512), this protein is Cysteine desulfuration protein SufE.